The sequence spans 191 residues: Abscisic acid receptor PYR1 (191 aa).

The tract at residues Tyr23–Glu176 is START-like. Residue Lys59 coordinates abscisate. Residue Thr78 is modified to Phosphothreonine; by CARK1. The Gate loop signature appears at Ser85–Ala89. Abscisate-binding positions include Ala89 to Glu94, Arg116 to Ser122, and Glu141. The Latch loop signature appears at His115–Leu117.

It belongs to the PYR/PYL/RCAR abscisic acid intracellular receptor family. As to quaternary structure, homodimer. Binds ABA on one subunit only. Interacts with HAB1, AHG3, ABI1 and ABI2 when complexed to ABA, and possibly with other PP2Cs. Binds to CARs protein in an ABA-independent manner, both at the plasma membrane and in the nucleus. Interacts directly with CAR1 and CAR4. Interacts with CARK1 in the cytosol. Interacts with AIP1 in an abscisic acid-dependent manner. Interacts with FREE1 (via N-terminus). Interacts with the E3 ubiquitin-protein ligase RSL1 at the plasma membrane. In terms of processing, ubiquitynated and degraded by the proteasome upon binding to the E3 ubiquitin-protein ligase RSL1 at the plasma membrane. Phosphorylated by CARK1 especially in response to abscisic acid (ABA); this phosphorylation promotes its stability and inhibitory ability to ABI1.

The protein resides in the cytoplasm. It localises to the cytosol. The protein localises to the nucleus. It is found in the cell membrane. Its subcellular location is the vacuole. Receptor for abscisic acid (ABA) required for ABA-mediated responses such as stomatal closure and germination inhibition. Inhibits the activity of group-A protein phosphatases type 2C (PP2Cs) when activated by ABA. Can be activated by both (-)-ABA and (+)-ABA. Promotes drought tolerance. This is Abscisic acid receptor PYR1 from Arabidopsis thaliana (Mouse-ear cress).